The chain runs to 150 residues: Large ribosomal subunit protein bL9 (150 aa).

The protein belongs to the bacterial ribosomal protein bL9 family.

In terms of biological role, binds to the 23S rRNA. In Hamiltonella defensa subsp. Acyrthosiphon pisum (strain 5AT), this protein is Large ribosomal subunit protein bL9.